Reading from the N-terminus, the 519-residue chain is Glutamate--cysteine ligase (519 aa).

The protein belongs to the glutamate--cysteine ligase type 1 family. Type 1 subfamily.

It catalyses the reaction L-cysteine + L-glutamate + ATP = gamma-L-glutamyl-L-cysteine + ADP + phosphate + H(+). It participates in sulfur metabolism; glutathione biosynthesis; glutathione from L-cysteine and L-glutamate: step 1/2. The chain is Glutamate--cysteine ligase from Yersinia pseudotuberculosis serotype I (strain IP32953).